Here is a 450-residue protein sequence, read N- to C-terminus: GTPase HflX (450 aa).

2 disordered regions span residues 79–110 and 173–196; these read TSMA…PDAA and RLRE…TLAL. The span at 178 to 189 shows a compositional bias: gly residues; the sequence is SGGGGRQQGPGA. Residues 230-395 enclose the Hflx-type G domain; sequence LRVALVGYTN…TLIAFFEAEM (166 aa). GTP-binding positions include 236–243, 261–265, 283–286, 349–352, and 373–375; these read GYTNAGKS, FATLD, DTVG, NKMD, and SAH. Residues S243 and T263 each contribute to the Mg(2+) site.

Belongs to the TRAFAC class OBG-HflX-like GTPase superfamily. HflX GTPase family. Monomer. Associates with the 50S ribosomal subunit. Mg(2+) is required as a cofactor.

It is found in the cytoplasm. Functionally, GTPase that associates with the 50S ribosomal subunit and may have a role during protein synthesis or ribosome biogenesis. The chain is GTPase HflX from Gluconacetobacter diazotrophicus (strain ATCC 49037 / DSM 5601 / CCUG 37298 / CIP 103539 / LMG 7603 / PAl5).